The following is a 301-amino-acid chain: ATP synthase gamma chain (301 aa).

Belongs to the ATPase gamma chain family. As to quaternary structure, F-type ATPases have 2 components, CF(1) - the catalytic core - and CF(0) - the membrane proton channel. CF(1) has five subunits: alpha(3), beta(3), gamma(1), delta(1), epsilon(1). CF(0) has three main subunits: a, b and c.

Its subcellular location is the cell inner membrane. Functionally, produces ATP from ADP in the presence of a proton gradient across the membrane. The gamma chain is believed to be important in regulating ATPase activity and the flow of protons through the CF(0) complex. The protein is ATP synthase gamma chain of Helicobacter pylori (strain G27).